The primary structure comprises 101 residues: Iron-sulfur cluster assembly protein CyaY (101 aa).

The protein belongs to the frataxin family.

In terms of biological role, involved in iron-sulfur (Fe-S) cluster assembly. May act as a regulator of Fe-S biogenesis. This chain is Iron-sulfur cluster assembly protein CyaY, found in Haemophilus influenzae (strain PittEE).